A 447-amino-acid polypeptide reads, in one-letter code: Gamma-glutamyl phosphate reductase (447 aa).

It belongs to the gamma-glutamyl phosphate reductase family.

The protein resides in the cytoplasm. It carries out the reaction L-glutamate 5-semialdehyde + phosphate + NADP(+) = L-glutamyl 5-phosphate + NADPH + H(+). The protein operates within amino-acid biosynthesis; L-proline biosynthesis; L-glutamate 5-semialdehyde from L-glutamate: step 2/2. Catalyzes the NADPH-dependent reduction of L-glutamate 5-phosphate into L-glutamate 5-semialdehyde and phosphate. The product spontaneously undergoes cyclization to form 1-pyrroline-5-carboxylate. This is Gamma-glutamyl phosphate reductase from Methanosarcina barkeri (strain Fusaro / DSM 804).